Here is a 674-residue protein sequence, read N- to C-terminus: tRNA-guanine(15) transglycosylase (674 aa).

Asp-90 acts as the Nucleophile in catalysis. Substrate contacts are provided by Asp-125 and Ala-192. Zn(2+)-binding residues include Cys-275, Cys-277, and Cys-280. The PUA domain maps to 596–671 (HNRVVVSEDS…QAIKTRKWKK (76 aa)).

It belongs to the archaeosine tRNA-ribosyltransferase family. The cofactor is Zn(2+).

The enzyme catalyses guanosine(15) in tRNA + 7-cyano-7-deazaguanine = 7-cyano-7-carbaguanosine(15) in tRNA + guanine. It functions in the pathway tRNA modification; archaeosine-tRNA biosynthesis. In terms of biological role, exchanges the guanine residue with 7-cyano-7-deazaguanine (preQ0) at position 15 in the dihydrouridine loop (D-loop) of archaeal tRNAs. This is tRNA-guanine(15) transglycosylase from Methanosphaera stadtmanae (strain ATCC 43021 / DSM 3091 / JCM 11832 / MCB-3).